A 131-amino-acid chain; its full sequence is D-ribose pyranase (131 aa).

His20 acts as the Proton donor in catalysis. Residues Asp28, His98, and 120-122 (YSN) each bind substrate.

The protein belongs to the RbsD / FucU family. RbsD subfamily. Homodecamer.

The protein resides in the cytoplasm. It carries out the reaction beta-D-ribopyranose = beta-D-ribofuranose. It functions in the pathway carbohydrate metabolism; D-ribose degradation; D-ribose 5-phosphate from beta-D-ribopyranose: step 1/2. In terms of biological role, catalyzes the interconversion of beta-pyran and beta-furan forms of D-ribose. The chain is D-ribose pyranase from Limosilactobacillus reuteri (strain DSM 20016) (Lactobacillus reuteri).